The primary structure comprises 258 residues: Ribosomal RNA small subunit methyltransferase A (258 aa).

The S-adenosyl-L-methionine site is built by His-13, Leu-15, Gly-41, Asp-63, Asp-87, and Asn-106.

This sequence belongs to the class I-like SAM-binding methyltransferase superfamily. rRNA adenine N(6)-methyltransferase family. RsmA subfamily.

It is found in the cytoplasm. It catalyses the reaction adenosine(1518)/adenosine(1519) in 16S rRNA + 4 S-adenosyl-L-methionine = N(6)-dimethyladenosine(1518)/N(6)-dimethyladenosine(1519) in 16S rRNA + 4 S-adenosyl-L-homocysteine + 4 H(+). Specifically dimethylates two adjacent adenosines (A1518 and A1519) in the loop of a conserved hairpin near the 3'-end of 16S rRNA in the 30S particle. May play a critical role in biogenesis of 30S subunits. The protein is Ribosomal RNA small subunit methyltransferase A of Cytophaga hutchinsonii (strain ATCC 33406 / DSM 1761 / CIP 103989 / NBRC 15051 / NCIMB 9469 / D465).